We begin with the raw amino-acid sequence, 471 residues long: Methylenetetrahydrofolate--tRNA-(uracil-5-)-methyltransferase TrmFO (471 aa).

9–14 (GGGLSG) contributes to the FAD binding site.

This sequence belongs to the MnmG family. TrmFO subfamily. Requires FAD as cofactor.

The protein localises to the cytoplasm. It catalyses the reaction uridine(54) in tRNA + (6R)-5,10-methylene-5,6,7,8-tetrahydrofolate + NADH + H(+) = 5-methyluridine(54) in tRNA + (6S)-5,6,7,8-tetrahydrofolate + NAD(+). The enzyme catalyses uridine(54) in tRNA + (6R)-5,10-methylene-5,6,7,8-tetrahydrofolate + NADPH + H(+) = 5-methyluridine(54) in tRNA + (6S)-5,6,7,8-tetrahydrofolate + NADP(+). In terms of biological role, catalyzes the folate-dependent formation of 5-methyl-uridine at position 54 (M-5-U54) in all tRNAs. This chain is Methylenetetrahydrofolate--tRNA-(uracil-5-)-methyltransferase TrmFO, found in Beijerinckia indica subsp. indica (strain ATCC 9039 / DSM 1715 / NCIMB 8712).